Consider the following 217-residue polypeptide: N-(5'-phosphoribosyl)anthranilate isomerase (217 aa).

The protein belongs to the TrpF family.

It catalyses the reaction N-(5-phospho-beta-D-ribosyl)anthranilate = 1-(2-carboxyphenylamino)-1-deoxy-D-ribulose 5-phosphate. It participates in amino-acid biosynthesis; L-tryptophan biosynthesis; L-tryptophan from chorismate: step 3/5. In Synechococcus sp. (strain ATCC 27144 / PCC 6301 / SAUG 1402/1) (Anacystis nidulans), this protein is N-(5'-phosphoribosyl)anthranilate isomerase.